Consider the following 313-residue polypeptide: Protein-methionine-sulfoxide reductase catalytic subunit MsrP (313 aa).

Positions 1-44 (MARWRPDTAEREATPEALYLRRREFLALGAAGAVGLLLPRGARA) form a signal peptide, tat-type signal. Mo-molybdopterin contacts are provided by residues asparagine 76, 79 to 80 (YE), cysteine 134, threonine 169, asparagine 217, arginine 222, and 233 to 235 (GAK).

Belongs to the MsrP family. As to quaternary structure, heterodimer of a catalytic subunit (MsrP) and a heme-binding subunit (MsrQ). Mo-molybdopterin is required as a cofactor. Predicted to be exported by the Tat system. The position of the signal peptide cleavage has not been experimentally proven.

The protein localises to the periplasm. The enzyme catalyses L-methionyl-[protein] + a quinone + H2O = L-methionyl-(S)-S-oxide-[protein] + a quinol. It catalyses the reaction L-methionyl-[protein] + a quinone + H2O = L-methionyl-(R)-S-oxide-[protein] + a quinol. Part of the MsrPQ system that repairs oxidized periplasmic proteins containing methionine sulfoxide residues (Met-O), using respiratory chain electrons. Thus protects these proteins from oxidative-stress damage caused by reactive species of oxygen and chlorine generated by the host defense mechanisms. MsrPQ is essential for the maintenance of envelope integrity under bleach stress, rescuing a wide series of structurally unrelated periplasmic proteins from methionine oxidation. The catalytic subunit MsrP is non-stereospecific, being able to reduce both (R-) and (S-) diastereoisomers of methionine sulfoxide. The sequence is that of Protein-methionine-sulfoxide reductase catalytic subunit MsrP from Anaeromyxobacter dehalogenans (strain 2CP-C).